A 525-amino-acid polypeptide reads, in one-letter code: Light-independent protochlorophyllide reductase subunit B (525 aa).

Aspartate 36 lines the [4Fe-4S] cluster pocket. Aspartate 274 serves as the catalytic Proton donor. 409 to 410 (GL) contacts substrate. The disordered stretch occupies residues 433 to 464 (HGGKAVAREESPVAPADLAPAATSDTPAAPSP). Over residues 444-464 (PVAPADLAPAATSDTPAAPSP) the composition is skewed to low complexity.

This sequence belongs to the ChlB/BchB/BchZ family. As to quaternary structure, protochlorophyllide reductase is composed of three subunits; BchL, BchN and BchB. Forms a heterotetramer of two BchB and two BchN subunits. The cofactor is [4Fe-4S] cluster.

It carries out the reaction chlorophyllide a + oxidized 2[4Fe-4S]-[ferredoxin] + 2 ADP + 2 phosphate = protochlorophyllide a + reduced 2[4Fe-4S]-[ferredoxin] + 2 ATP + 2 H2O. It functions in the pathway porphyrin-containing compound metabolism; bacteriochlorophyll biosynthesis (light-independent). Component of the dark-operative protochlorophyllide reductase (DPOR) that uses Mg-ATP and reduced ferredoxin to reduce ring D of protochlorophyllide (Pchlide) to form chlorophyllide a (Chlide). This reaction is light-independent. The NB-protein (BchN-BchB) is the catalytic component of the complex. This is Light-independent protochlorophyllide reductase subunit B from Rhodobacter capsulatus (strain ATCC BAA-309 / NBRC 16581 / SB1003).